We begin with the raw amino-acid sequence, 619 residues long: Chaperone protein HscA homolog (619 aa).

It belongs to the heat shock protein 70 family.

Its function is as follows. Chaperone involved in the maturation of iron-sulfur cluster-containing proteins. Has a low intrinsic ATPase activity which is markedly stimulated by HscB. In Acinetobacter baumannii (strain ATCC 17978 / DSM 105126 / CIP 53.77 / LMG 1025 / NCDC KC755 / 5377), this protein is Chaperone protein HscA homolog.